The sequence spans 286 residues: Phosphatidylglycerol--prolipoprotein diacylglyceryl transferase (286 aa).

The next 7 membrane-spanning stretches (helical) occupy residues 24–44, 72–92, 104–124, 140–160, 190–210, 218–238, and 253–273; these read IGPLAVHWYGVGYIVGILFAW, FIVWAAIGVVLGGRTGYVLFY, IFAVWQGGMSFHGGLLGVILA, FDVVAAGVPVGLGLVRVANFI, LYEALLEGLVLFVVLRILTHS, RFVGGAFICGYGLSRIFVEFF, and WLTMGMILSTPMVLAGIWAMA. An a 1,2-diacyl-sn-glycero-3-phospho-(1'-sn-glycerol)-binding site is contributed by R155.

Belongs to the Lgt family.

Its subcellular location is the cell inner membrane. It carries out the reaction L-cysteinyl-[prolipoprotein] + a 1,2-diacyl-sn-glycero-3-phospho-(1'-sn-glycerol) = an S-1,2-diacyl-sn-glyceryl-L-cysteinyl-[prolipoprotein] + sn-glycerol 1-phosphate + H(+). It functions in the pathway protein modification; lipoprotein biosynthesis (diacylglyceryl transfer). Its function is as follows. Catalyzes the transfer of the diacylglyceryl group from phosphatidylglycerol to the sulfhydryl group of the N-terminal cysteine of a prolipoprotein, the first step in the formation of mature lipoproteins. The chain is Phosphatidylglycerol--prolipoprotein diacylglyceryl transferase from Mesorhizobium japonicum (strain LMG 29417 / CECT 9101 / MAFF 303099) (Mesorhizobium loti (strain MAFF 303099)).